Reading from the N-terminus, the 55-residue chain is Large ribosomal subunit protein eL37 (55 aa).

Cysteine 20, cysteine 23, cysteine 35, and cysteine 38 together coordinate Zn(2+). The segment at 20 to 38 (CRRCGKNSYHKRHHRCSSC) adopts a C4-type zinc-finger fold.

Belongs to the eukaryotic ribosomal protein eL37 family. Requires Zn(2+) as cofactor.

Its function is as follows. Binds to the 23S rRNA. This chain is Large ribosomal subunit protein eL37, found in Cenarchaeum symbiosum (strain A).